The chain runs to 779 residues: uncharacterized protein (779 aa).

Residues Cys-72 and Cys-75 each coordinate [4Fe-4S] cluster.

The protein belongs to the prokaryotic molybdopterin-containing oxidoreductase family. [4Fe-4S] cluster is required as a cofactor. Mo-bis(molybdopterin guanine dinucleotide) serves as cofactor.

This is an uncharacterized protein from Mycobacterium bovis (strain ATCC BAA-935 / AF2122/97).